Here is a 467-residue protein sequence, read N- to C-terminus: 5'-nucleotidase domain-containing protein 1 (467 aa).

The active-site Nucleophile is the D16. The Mg(2+) site is built by D16 and D18. Catalysis depends on D18, which acts as the Proton donor. Position 181 is an N6-acetyllysine (K181). D323 contacts Mg(2+).

Belongs to the 5'(3')-deoxyribonucleotidase family.

This Mus musculus (Mouse) protein is 5'-nucleotidase domain-containing protein 1 (Nt5dc1).